The chain runs to 207 residues: Lipid A acyltransferase PagP (207 aa).

Residues 1-24 (MKFDLTTAYTLSIPLLASSGTVLA) form the signal peptide. Active-site residues include His-79, Asp-122, and Ser-123.

The protein belongs to the lipid A palmitoyltransferase family. As to quaternary structure, homodimer.

It is found in the cell outer membrane. The catalysed reaction is a lipid A + a 1,2-diacyl-sn-glycero-3-phosphocholine = a hepta-acyl lipid A + a 2-acyl-sn-glycero-3-phosphocholine. It carries out the reaction a lipid IVA + a 1,2-diacyl-sn-glycero-3-phosphocholine = a lipid IVB + a 2-acyl-sn-glycero-3-phosphocholine. The enzyme catalyses a lipid IIA + a 1,2-diacyl-sn-glycero-3-phosphocholine = a lipid IIB + a 2-acyl-sn-glycero-3-phosphocholine. In terms of biological role, transfers a fatty acid residue from the sn-1 position of a phospholipid to the N-linked hydroxyfatty acid chain on the proximal unit of lipid A or its precursors. In Photorhabdus asymbiotica subsp. asymbiotica (strain ATCC 43949 / 3105-77) (Xenorhabdus luminescens (strain 2)), this protein is Lipid A acyltransferase PagP.